The primary structure comprises 185 residues: Elongation factor P (185 aa).

Belongs to the elongation factor P family.

Its subcellular location is the cytoplasm. The protein operates within protein biosynthesis; polypeptide chain elongation. Involved in peptide bond synthesis. Stimulates efficient translation and peptide-bond synthesis on native or reconstituted 70S ribosomes in vitro. Probably functions indirectly by altering the affinity of the ribosome for aminoacyl-tRNA, thus increasing their reactivity as acceptors for peptidyl transferase. In Geobacillus sp. (strain WCH70), this protein is Elongation factor P.